Reading from the N-terminus, the 316-residue chain is Lipoyl synthase (316 aa).

The span at 1–15 (MKARNESMSKGEYKT) shows a compositional bias: basic and acidic residues. A disordered region spans residues 1–33 (MKARNESMSKGEYKTKSLKNRPDPTQPKLKKPS). C64, C69, C75, C90, C94, C97, and S304 together coordinate [4Fe-4S] cluster. The Radical SAM core domain maps to 76 to 293 (FGHGTATFMI…EQAGMEMGFT (218 aa)).

This sequence belongs to the radical SAM superfamily. Lipoyl synthase family. It depends on [4Fe-4S] cluster as a cofactor.

Its subcellular location is the cytoplasm. It catalyses the reaction [[Fe-S] cluster scaffold protein carrying a second [4Fe-4S](2+) cluster] + N(6)-octanoyl-L-lysyl-[protein] + 2 oxidized [2Fe-2S]-[ferredoxin] + 2 S-adenosyl-L-methionine + 4 H(+) = [[Fe-S] cluster scaffold protein] + N(6)-[(R)-dihydrolipoyl]-L-lysyl-[protein] + 4 Fe(3+) + 2 hydrogen sulfide + 2 5'-deoxyadenosine + 2 L-methionine + 2 reduced [2Fe-2S]-[ferredoxin]. It participates in protein modification; protein lipoylation via endogenous pathway; protein N(6)-(lipoyl)lysine from octanoyl-[acyl-carrier-protein]: step 2/2. Its function is as follows. Catalyzes the radical-mediated insertion of two sulfur atoms into the C-6 and C-8 positions of the octanoyl moiety bound to the lipoyl domains of lipoate-dependent enzymes, thereby converting the octanoylated domains into lipoylated derivatives. This Hydrogenovibrio crunogenus (strain DSM 25203 / XCL-2) (Thiomicrospira crunogena) protein is Lipoyl synthase.